We begin with the raw amino-acid sequence, 350 residues long: Izumo sperm-egg fusion protein 1 (350 aa).

An N-terminal signal peptide occupies residues 1 to 21; sequence MGPHFTLLCAALAGCLLPAEG. Intrachain disulfides connect cysteine 22–cysteine 149, cysteine 25–cysteine 152, cysteine 135–cysteine 159, cysteine 139–cysteine 165, and cysteine 182–cysteine 233. At 22–292 the chain is on the extracellular side; the sequence is CVICDPSVVL…LQPEKMLASR (271 aa). The important for interaction with IZUMO1R stretch occupies residues 148 to 160; the sequence is WCKNCKKEVHACR. An Ig-like C2-type domain is found at 167–251; that stretch reads ERNVEVPQME…PATIINFHVT (85 aa). Asparagine 204 carries N-linked (GlcNAc...) asparagine glycosylation. A helical transmembrane segment spans residues 293-313; the sequence is LLGLLICGSLALITGLTFAIF. At 314–350 the chain is on the cytoplasmic side; sequence RRRKVIDFIKSSLFGLGSGAAEQTQVPKEKATDSRQQ. At serine 325 the chain carries Phosphoserine.

It belongs to the Izumo family. In terms of assembly, monomer, homodimer; disulfide-linked and homooligomer; depending on the context. Interacts with IZUMO1R/JUNO. IZUMO1 and IZUMO1R/JUNO form a complex with 1:1 stoichiometry. In gamete recognition, IZUMO1R/JUNO first binds to monomeric IZUMO1. The weak, but specific interaction with IZUMO1R/JUNO induces IZUMO1 homodimerization. The process follows a tight binding phase where IZUMO1 bends the entire structure towards the sperm membrane side through a thiol-disulfide exchange reaction. The molecule no longer binds to IZUMO1R/JUNO and instead binds to a putative second oocyte receptor. Interacts with ACE3. Part of a oolemmal binding multimeric complex (IZUMO1 complex) composed at least of IZUMO1 and GLIPR1L1; the complex assemblage is influenced by the maturation status of the male germ cell. Interacts with GLIPR1L1. Interacts with FREY; the interaction retains IZUMO1 at the endoplasmic reticulum membrane and coordinates IZUMO1 complex assembly. Interacts with FCRL3/MAIA (via extracellular domain); the interaction replaces IZUMO1R/JUNO as IZUMO1 receptor after sperm-egg adhesion. Interacts with WDR54. Forms a complex with SPACA6 and TMEM81 on spermatocyte cell membrane. In terms of processing, N-glycosylated. Glycosylation is not essential for fusion and for proper protein trafficking in sperm. Phosphorylated. The cytoplasmic C-terminus is phosphorylated and undergoes phosphorylation changes during epididymal transit. In terms of tissue distribution, sperm-specific (at protein level). Detectable on sperm surface only after the acrosome reaction.

The protein localises to the cell membrane. It is found in the cytoplasmic vesicle. Its subcellular location is the secretory vesicle. The protein resides in the acrosome membrane. Its function is as follows. Essential sperm cell-surface protein required for fertilization by acting as a ligand for IZUMO1R/JUNO receptor on egg. The IZUMO1:IZUMO1R/JUNO interaction is a necessary adhesion event between sperm and egg that is required for fertilization but is not sufficient for cell fusion. The ligand-receptor interaction probably does not act as a membrane 'fusogen'. Acts a ligand for the human-specific oolemma epitope FCRL3/MAIA during fertilization. FCRL3/MAIA replaces IZUMO1R/JUNO as IZUMO1 receptor after sperm-egg adhesion, which permits species-specific gamete fusion. Plays a critical role in sperm-oolemma binding prior to plasma membrane fusion. Can mediate cell-cell fusion in cultured mammalian cells independently of its binding to IZUMO1R/JUNO. This chain is Izumo sperm-egg fusion protein 1, found in Homo sapiens (Human).